A 298-amino-acid chain; its full sequence is Protein ABIL1 (298 aa).

The protein belongs to the ABI family. Binds SCAR2. As to expression, expressed in seedlings, roots, hypocotyls, cotyledons, leaves, stems, and flowers.

The protein resides in the cytoplasm. It is found in the cytoskeleton. In terms of biological role, involved in regulation of actin and microtubule organization. Part of a WAVE complex that activates the Arp2/3 complex. The protein is Protein ABIL1 (ABIL1) of Arabidopsis thaliana (Mouse-ear cress).